The sequence spans 588 residues: MSDKKIKGLEWQEKPLSDNERLKTDSNFLRGTILDDLKDDLTGGFKGDNFQLIRFHGMYEQDDRDIRAERLEEKLEPLKFMLLRCRLPGGIIKPYQWIEIDKFAREHTRYQSIRLTNRQTFQYHGVPKGKLQPMHRLLHSIGLDSIATAADMNRNVLCTSNPIESELHQQAYEFAKKISEHLLPRSRGYLDVWVDGKKVESSDDLLKIEDEPILGKTYLPRKFKTAVAIPPLNDVDVYANDLNFIAIQDENGQLCGFNVLVGGGLSFEHGNTKTYPNVAYSLGFVPLEHTLAAAEGVVKTQRDFGNRSDRKNARVRYTVQNMTLDGFRAEVERCMNIKFEPTRPYEFTERGDRIGWVKGIDNNWHLTLFIESVRITDKPEKPLMTGVLELAKVHKGDFRITANQNLIVANVAEQDKAQIEAIARQYGLIQEISKLRENAMSCVSLPTCPLAMAEAERVLPDFISELDKVLSKHNVADESIITRITGCPNGCGRAMLAEIGLVGKAIGRYNLHIGGDRAGLRISRLYKENITLQEIVNEIDQLVARWATERQTNEAFGDFVIRSNIIAPVVNAHIDFWDATKIIPTTII.

4 residues coordinate [4Fe-4S] cluster: cysteine 442, cysteine 448, cysteine 487, and cysteine 491. A siroheme-binding site is contributed by cysteine 491.

Belongs to the nitrite and sulfite reductase 4Fe-4S domain family. Alpha(8)-beta(8). The alpha component is a flavoprotein, the beta component is a hemoprotein. The cofactor is siroheme. It depends on [4Fe-4S] cluster as a cofactor.

It catalyses the reaction hydrogen sulfide + 3 NADP(+) + 3 H2O = sulfite + 3 NADPH + 4 H(+). It participates in sulfur metabolism; hydrogen sulfide biosynthesis; hydrogen sulfide from sulfite (NADPH route): step 1/1. Its function is as follows. Component of the sulfite reductase complex that catalyzes the 6-electron reduction of sulfite to sulfide. This is one of several activities required for the biosynthesis of L-cysteine from sulfate. This chain is Sulfite reductase [NADPH] hemoprotein beta-component, found in Actinobacillus pleuropneumoniae serotype 5b (strain L20).